The chain runs to 440 residues: Thymidine phosphorylase (440 aa).

It belongs to the thymidine/pyrimidine-nucleoside phosphorylase family. In terms of assembly, homodimer.

The enzyme catalyses thymidine + phosphate = 2-deoxy-alpha-D-ribose 1-phosphate + thymine. The protein operates within pyrimidine metabolism; dTMP biosynthesis via salvage pathway; dTMP from thymine: step 1/2. Its function is as follows. The enzymes which catalyze the reversible phosphorolysis of pyrimidine nucleosides are involved in the degradation of these compounds and in their utilization as carbon and energy sources, or in the rescue of pyrimidine bases for nucleotide synthesis. This is Thymidine phosphorylase from Shigella boydii serotype 4 (strain Sb227).